A 179-amino-acid chain; its full sequence is Bifunctional protein PyrR (179 aa).

The short motif at 100–112 (VILVDDVLFTGRT) is the PRPP-binding element.

Belongs to the purine/pyrimidine phosphoribosyltransferase family. PyrR subfamily.

It catalyses the reaction UMP + diphosphate = 5-phospho-alpha-D-ribose 1-diphosphate + uracil. Regulates the transcription of the pyrimidine nucleotide (pyr) operon in response to exogenous pyrimidines. In terms of biological role, also displays a weak uracil phosphoribosyltransferase activity which is not physiologically significant. In Actinobacillus succinogenes (strain ATCC 55618 / DSM 22257 / CCUG 43843 / 130Z), this protein is Bifunctional protein PyrR.